A 191-amino-acid chain; its full sequence is NAD(P)H dehydrogenase (quinone) (191 aa).

The 181-residue stretch at 4–184 folds into the Flavodoxin-like domain; sequence ILVIFHSITG…VAKMLGKRVA (181 aa). Residues 10 to 15, 83 to 85, and 118 to 124 each bind FMN; these read SITGNT, TRF, and SNEMPHG.

Belongs to the WrbA family. In terms of assembly, homodimer and homotetramer; in equilibrium. Requires FMN as cofactor.

It catalyses the reaction a quinone + NADH + H(+) = a quinol + NAD(+). The catalysed reaction is a quinone + NADPH + H(+) = a quinol + NADP(+). Functionally, it seems to function in response to environmental stress when various electron transfer chains are affected or when the environment is highly oxidizing. It reduces quinones to the hydroquinone state to prevent interaction of the semiquinone with O2 and production of superoxide. It prefers NADH over NADPH. The protein is NAD(P)H dehydrogenase (quinone) of Archaeoglobus fulgidus (strain ATCC 49558 / DSM 4304 / JCM 9628 / NBRC 100126 / VC-16).